The sequence spans 70 residues: Drosomycin (70 aa).

The N-terminal stretch at 1-20 (MMQIKYLFALFAVLMLVVLG) is a signal peptide. Residues 21 to 26 (ANEADA) constitute a propeptide that is removed on maturation. Cystine bridges form between Cys-28/Cys-70, Cys-37/Cys-59, Cys-45/Cys-65, and Cys-49/Cys-67. Asn-42 carries N-linked (GlcNAc...) asparagine glycosylation.

As to expression, hemolymph (at protein level). Synthesized in the fat body and is secreted into the blood. In larvae, expressed in the visceral branches and posterior spiracles of the trachea.

It localises to the secreted. Possesses antifungal activity and is active against a relatively broad spectrum of filamentous fungi. It inhibits spore germination at high concentrations and at low concentrations delays growth of hyphae which subsequently exhibit abnormal morphology. Spz C-106 in the hemolymph controls expression of the antifungal peptide by acting as a ligand of Tl and inducing an intracellular signaling pathway. Part of a psh-dependent Toll pathway, which may function in activating the systematic immune response in response to localized melanization of the tracheal system. The chain is Drosomycin (Drs) from Drosophila melanogaster (Fruit fly).